The sequence spans 479 residues: Beta-amyrin 28-monooxygenase (479 aa).

A helical transmembrane segment spans residues 5–25 (FYLSLLLLFVTFISLSLFFIF). Residue Cys-426 participates in heme binding.

This sequence belongs to the cytochrome P450 family. Requires heme as cofactor. In terms of tissue distribution, expressed in roots, nodules and flowers.

It localises to the membrane. The catalysed reaction is beta-amyrin + 3 reduced [NADPH--hemoprotein reductase] + 3 O2 = oleanolate + 3 oxidized [NADPH--hemoprotein reductase] + 4 H2O + 4 H(+). Catalyzes the carboxylation of beta-amyrin at the C-28 position to form oleanolic acid. Involved in an early step in the hemolytic saponin biosynthetic pathway. Catalyzes the carboxylation of alpha-amyrin and lupeol at the C-28 position to form ursolic acid and betulinic acid respectively. The protein is Beta-amyrin 28-monooxygenase of Medicago truncatula (Barrel medic).